A 141-amino-acid chain; its full sequence is Nucleoside diphosphate kinase (141 aa).

6 residues coordinate ATP: Lys9, Phe57, Arg85, Thr91, Arg102, and Asn112. His115 serves as the catalytic Pros-phosphohistidine intermediate.

Belongs to the NDK family. Homotetramer. Mg(2+) is required as a cofactor.

The protein localises to the cytoplasm. It carries out the reaction a 2'-deoxyribonucleoside 5'-diphosphate + ATP = a 2'-deoxyribonucleoside 5'-triphosphate + ADP. The enzyme catalyses a ribonucleoside 5'-diphosphate + ATP = a ribonucleoside 5'-triphosphate + ADP. Its function is as follows. Major role in the synthesis of nucleoside triphosphates other than ATP. The ATP gamma phosphate is transferred to the NDP beta phosphate via a ping-pong mechanism, using a phosphorylated active-site intermediate. The chain is Nucleoside diphosphate kinase from Chlamydia caviae (strain ATCC VR-813 / DSM 19441 / 03DC25 / GPIC) (Chlamydophila caviae).